A 394-amino-acid polypeptide reads, in one-letter code: Putative fimbrial assembly protein FimD, serogroup D (394 aa).

This is Putative fimbrial assembly protein FimD, serogroup D (fimD) from Dichelobacter nodosus (Bacteroides nodosus).